The primary structure comprises 500 residues: Lysine--tRNA ligase (500 aa).

Positions 412 and 419 each coordinate Mg(2+).

It belongs to the class-II aminoacyl-tRNA synthetase family. Homodimer. Mg(2+) serves as cofactor.

It localises to the cytoplasm. The enzyme catalyses tRNA(Lys) + L-lysine + ATP = L-lysyl-tRNA(Lys) + AMP + diphosphate. This is Lysine--tRNA ligase from Kineococcus radiotolerans (strain ATCC BAA-149 / DSM 14245 / SRS30216).